The following is a 256-amino-acid chain: Diacetyl reductase [(S)-acetoin forming] (256 aa).

NAD(+) contacts are provided by residues 6 to 33 and Asp59; that span reads LVTGAGQGIGKAIALRLVKDGFAVAIAD. Ser139 serves as a coordination point for substrate. The active-site Proton acceptor is Tyr152. Residue Lys156 coordinates NAD(+).

Belongs to the short-chain dehydrogenases/reductases (SDR) family. In terms of assembly, homotetramer.

The catalysed reaction is (S)-acetoin + NAD(+) = diacetyl + NADH + H(+). Catalyzes the reversible reduction of (S)-acetoin to 2,3-butanediol in the presence of NADH. The polypeptide is Diacetyl reductase [(S)-acetoin forming] (budC) (Klebsiella pneumoniae).